The chain runs to 530 residues: Autoinducer-2 kinase (530 aa).

It belongs to the FGGY kinase family.

It localises to the cytoplasm. It catalyses the reaction (S)-4,5-dihydroxypentane-2,3-dione + ATP = (2S)-2-hydroxy-3,4-dioxopentyl phosphate + ADP + H(+). Functionally, catalyzes the phosphorylation of autoinducer-2 (AI-2) to phospho-AI-2, which subsequently inactivates the transcriptional regulator LsrR and leads to the transcription of the lsr operon. Phosphorylates the ring-open form of (S)-4,5-dihydroxypentane-2,3-dione (DPD), which is the precursor to all AI-2 signaling molecules, at the C5 position. The protein is Autoinducer-2 kinase of Salmonella choleraesuis (strain SC-B67).